A 241-amino-acid polypeptide reads, in one-letter code: Ribose-5-phosphate isomerase A (241 aa).

Substrate-binding positions include 28–31 (TGST), 83–86 (DGAD), and 96–99 (KGGG). The active-site Proton acceptor is the Glu105. Lys123 lines the substrate pocket.

The protein belongs to the ribose 5-phosphate isomerase family. Homodimer.

It catalyses the reaction aldehydo-D-ribose 5-phosphate = D-ribulose 5-phosphate. The protein operates within carbohydrate degradation; pentose phosphate pathway; D-ribose 5-phosphate from D-ribulose 5-phosphate (non-oxidative stage): step 1/1. Catalyzes the reversible conversion of ribose-5-phosphate to ribulose 5-phosphate. The polypeptide is Ribose-5-phosphate isomerase A (Rhodopseudomonas palustris (strain BisA53)).